We begin with the raw amino-acid sequence, 769 residues long: Glutathione biosynthesis bifunctional protein GshAB (769 aa).

A glutamate--cysteine ligase region spans residues 1–347; it reads MLDSFKEDPN…QLADENENNI (347 aa). The ATP-grasp domain maps to 514–768; that stretch reads KLVLAEHDIR…IGDKILDFLF (255 aa). 541–599 lines the ATP pocket; sequence SLFEDKQIVVKPKSTNYGWGISIFKNKFTLEDYQEALNIAFSYDSSVIIEEFIPGDEFR. Mg(2+) is bound by residues aspartate 721, glutamate 738, and asparagine 740. Aspartate 721, glutamate 738, and asparagine 740 together coordinate Mn(2+).

The protein in the N-terminal section; belongs to the glutamate--cysteine ligase type 1 family. Type 2 subfamily. Monomer. Mg(2+) is required as a cofactor. Mn(2+) serves as cofactor.

It catalyses the reaction L-cysteine + L-glutamate + ATP = gamma-L-glutamyl-L-cysteine + ADP + phosphate + H(+). The enzyme catalyses gamma-L-glutamyl-L-cysteine + glycine + ATP = glutathione + ADP + phosphate + H(+). The protein operates within sulfur metabolism; glutathione biosynthesis; glutathione from L-cysteine and L-glutamate: step 1/2. It participates in sulfur metabolism; glutathione biosynthesis; glutathione from L-cysteine and L-glutamate: step 2/2. Its function is as follows. Synthesizes glutathione from L-glutamate and L-cysteine via gamma-L-glutamyl-L-cysteine. This chain is Glutathione biosynthesis bifunctional protein GshAB, found in Listeria monocytogenes serovar 1/2a (strain ATCC BAA-679 / EGD-e).